Reading from the N-terminus, the 387-residue chain is Formate-dependent phosphoribosylglycinamide formyltransferase (387 aa).

Residues glutamate 15–leucine 16 and glutamate 75 each bind N(1)-(5-phospho-beta-D-ribosyl)glycinamide. Residues arginine 106, lysine 147, serine 152–glutamine 157, glutamate 187–isoleucine 190, and glutamate 195 each bind ATP. One can recognise an ATP-grasp domain in the interval aspartate 111–leucine 301. Positions 260 and 272 each coordinate Mg(2+). Residues aspartate 279, lysine 349, and arginine 356 to arginine 357 each bind N(1)-(5-phospho-beta-D-ribosyl)glycinamide.

The protein belongs to the PurK/PurT family. Homodimer.

It catalyses the reaction N(1)-(5-phospho-beta-D-ribosyl)glycinamide + formate + ATP = N(2)-formyl-N(1)-(5-phospho-beta-D-ribosyl)glycinamide + ADP + phosphate + H(+). The protein operates within purine metabolism; IMP biosynthesis via de novo pathway; N(2)-formyl-N(1)-(5-phospho-D-ribosyl)glycinamide from N(1)-(5-phospho-D-ribosyl)glycinamide (formate route): step 1/1. Involved in the de novo purine biosynthesis. Catalyzes the transfer of formate to 5-phospho-ribosyl-glycinamide (GAR), producing 5-phospho-ribosyl-N-formylglycinamide (FGAR). Formate is provided by PurU via hydrolysis of 10-formyl-tetrahydrofolate. This is Formate-dependent phosphoribosylglycinamide formyltransferase from Prochlorococcus marinus (strain NATL2A).